The sequence spans 258 residues: U6 snRNA phosphodiesterase 1 (258 aa).

The segment at 1–20 (MALVDYGGSSSSASEDEDCT) is disordered. Catalysis depends on His-117, which acts as the Proton acceptor. AMP contacts are provided by residues 117–119 (HLS), Tyr-200, and 202–208 (PASFHVS). UMP-binding positions include Tyr-200 and 204–208 (SFHVS). The active-site Proton donor is the His-206.

The protein belongs to the 2H phosphoesterase superfamily. USB1 family.

Its subcellular location is the nucleus. It carries out the reaction a 3'-end uridylyl-uridine-RNA = a 3'-end 2',3'-cyclophospho-uridine-RNA + uridine. Its function is as follows. 3'-5' RNA exonuclease that trims the 3' end of oligo(U) tracts of the pre-U6 small nuclear RNA (snRNA) molecule, leading to the formation of a mature U6 snRNA 3' end-terminated with a 2',3'-cyclic phosphate. Participates in the U6 snRNA 3' end processing that prevents U6 snRNA degradation. This is U6 snRNA phosphodiesterase 1 from Drosophila melanogaster (Fruit fly).